The chain runs to 195 residues: CASP-like protein 1B1 (195 aa).

Topologically, residues 1–22 (MGLQNEEKLELGCTGLQPKPKK) are cytoplasmic. A helical membrane pass occupies residues 23–43 (WVLLMVRVVAFLATAAATLVM). Residues 44–75 (ALNKETKTLVVATVGNTPIKVTLTAKFQHTPA) lie on the Extracellular side of the membrane. Residues 76–96 (FVFFVIANGMASFHNLLMIMV) form a helical membrane-spanning segment. The Cytoplasmic segment spans residues 97–109 (ELCGQKLDYKGMR). A helical membrane pass occupies residues 110–130 (LAMVAILDMMTVALVSGGASA). Residues 131–163 (ATFMAELGKNGNSHARWDKICDKFETFCDHGGA) lie on the Extracellular side of the membrane. The helical transmembrane segment at 164-184 (ALIASSAGLILMMIISVMSIM) threads the bilayer. The Cytoplasmic segment spans residues 185-195 (KLLIKPKSDSS).

The protein belongs to the Casparian strip membrane proteins (CASP) family. Homodimer and heterodimers.

It is found in the cell membrane. The polypeptide is CASP-like protein 1B1 (Populus trichocarpa (Western balsam poplar)).